Reading from the N-terminus, the 183-residue chain is Translocon-associated protein subunit beta (183 aa).

An N-terminal signal peptide occupies residues 1–17; sequence MRLLAFAVLALFAVTQA. Residues 18-146 lie on the Lumenal side of the membrane; the sequence is EEGARLLASK…REFDRRFSPH (129 aa). The N-linked (GlcNAc...) asparagine glycan is linked to Asn-88. The chain crosses the membrane as a helical span at residues 147-167; it reads FLDWAAFGVMTLPSIGVPLLL. Residues 168-183 are Cytoplasmic-facing; sequence WYSSKRKYDTPKTKKN.

Belongs to the TRAP-beta family. In terms of assembly, heterotetramer of TRAP-alpha, TRAP-beta, TRAP-delta and TRAP-gamma. Interacts with STING1.

Its subcellular location is the endoplasmic reticulum membrane. TRAP proteins are part of a complex whose function is to bind calcium to the ER membrane and thereby regulate the retention of ER resident proteins. In Bos taurus (Bovine), this protein is Translocon-associated protein subunit beta (SSR2).